Here is a 346-residue protein sequence, read N- to C-terminus: Methylthioribose-1-phosphate isomerase (346 aa).

Residues 54 to 56, R91, and Q192 contribute to the substrate site; that span reads RGA. The active-site Proton donor is D233. Residue 243–244 participates in substrate binding; it reads NK.

The protein belongs to the eIF-2B alpha/beta/delta subunits family. MtnA subfamily.

The enzyme catalyses 5-(methylsulfanyl)-alpha-D-ribose 1-phosphate = 5-(methylsulfanyl)-D-ribulose 1-phosphate. It participates in amino-acid biosynthesis; L-methionine biosynthesis via salvage pathway; L-methionine from S-methyl-5-thio-alpha-D-ribose 1-phosphate: step 1/6. Catalyzes the interconversion of methylthioribose-1-phosphate (MTR-1-P) into methylthioribulose-1-phosphate (MTRu-1-P). The polypeptide is Methylthioribose-1-phosphate isomerase (Yersinia pseudotuberculosis serotype IB (strain PB1/+)).